A 301-amino-acid polypeptide reads, in one-letter code: MKLDYNSREIFFGNEALIVADMTKGSNGKPEFTNHKIVTGLVSVGSMEDQAETNSYPADDVPDHGVKKGATLLQGEMVFIQTDQALKEDILGQQRTENGLGWSPTGNWKTKCVQYLIKGRKRDKVTGEFVDGYRVVVYPHLTPTAEATKESETDSVDGVDPIQWTLAVQATDSDIYSNGGKKVPAIEYEIWGEQAKDFAKKMESGLFIMQPDTVLAGAITLVAPVIPNVTTATKGNNDGTIVVPATLKDSKGGTIKVTSVIKDAHGKVATNGQLAPGVYIVTFSADGYEDVTAGVSVTDHS.

Belongs to the skunalikevirus tail tube protein family. As to quaternary structure, homohexamer. Interacts with the tail terminator protein.

It localises to the virion. Functionally, forms the cylindrical rigid tail tube with a 4 nm wide central channel for DNA ejection. The tube is composed of 31 hexameric rings. The polypeptide is Tail tube protein (Lactococcus phage SK1 (Lactococcus lactis bacteriophage SK1)).